The following is a 130-amino-acid chain: Small ribosomal subunit protein uS8 (130 aa).

It belongs to the universal ribosomal protein uS8 family. As to quaternary structure, part of the 30S ribosomal subunit. Contacts proteins S5 and S12.

Functionally, one of the primary rRNA binding proteins, it binds directly to 16S rRNA central domain where it helps coordinate assembly of the platform of the 30S subunit. The protein is Small ribosomal subunit protein uS8 of Buchnera aphidicola subsp. Acyrthosiphon kondoi (Acyrthosiphon kondoi symbiotic bacterium).